The chain runs to 1427 residues: METEPDQEHLDQNPCARTVEEELSKSFNLEASLSKFSCLDLDKELEFRSDLIDDKEFDIPQVDTPPTLESILNETDDEDESFVLEDPTLLNVDTIDSHSYDTSSVASSDSGDRANLKRKKKLPDSFSLHGSVMRHSLLKGISAQIVSAADKVDAGLPTAIAVSSLIAVGTSHGLALIFDQNQALRLCLGSTSVGGQYGAISALSINNDCSRLLCGFAKGQITMWDLASGKLLRSITDAHPPGTAILHIKFTDDPTLAICNDSGGSVFELTFKRVMGVRTCESRCLFSGSKGEVCCIEPLHSKPELKDHPITQFSLLAMASLTKILVIGLKPSLKVWMTFPYGRMDPSSVPLLAWHFVAVNNSVNPMLAFCRGDMVHFLLVKRDESGAIHVTKQKHLHLYYDLINFTWINSRTVVLLDSVEKLHVIDRQTQEELETMEISEVQLVYNSSHFKSLATGGNVSQALALVGEKACYQSISSYGGQIFYLGTKSVYVMMLRSWRERMDHLLKQDCLTEALALAWSFHEGKAKAVVGLSGDVSKRKAVVADRMVEILFHYADRALKKCPDQGKIQVMEQHFQDTVPVIVDYCLLLQRKDLLFGQMYDKLSENSVAKGVFLECLEPYILSDKLVGITPQVMKDLIVHFQDKKLLENVEALIVHMDITSLDIQQVVLMCWENRLYDAMVYVYNRGMNEFISPMEKLFKVIAPPLNAGKTLTDEQVVMGNKLLVYISCCLAGRAYPLGDIPEDLVPLVKNQVFEFLIRLHSVEASSEEEVYPYVRTLLHFDTREFLNVLALTFEDFKNDKQAVEYQQRIVDILLKVMVENSDFTPSQVGCLFTFLARQLAKPDNTLFVNRTLFDQVLEFLCSPDDDSRHSERQQVLLELLQAGGIVQFEESRLIRMAEKAEFYQICEFMYEREHQYDKIIDCYLHDPLREEEVFNYIHNILSIPGHSAEEKQSVWQKAMNHMEELVSLKPCKAAELVATHFSEQIEVVIGQLQNQLLLFKFLRSLLDPREGVHVNQELLQIPPHITEQFIELLCQFSPDQVIQTLQVLECYRLEETIQITQKYQLHEVTAYLLEKKGDAHGAFLLLLERLQSRLQEMTRQDENTKEDILLKGVEDTMVETIALCQRNSQNLNQQQREALWFPLLEAMMTPQKLSSSAAAPHPHCEALKSLTMQVLNSMAAFIALPSILQRILQDPIYGKGKLGEIQGLILGMLDTFNYEQTLLETTASLLNQDLHWSLCNLRASVSRGLNPKQDYCSICLQQYKRRQEMADEIIVFSCGHLYHSFCLQSKECTLEVEGQTRWACHKCSSSNKAGKLSENPSENKKGRITSSQVKMSPSYHQSKGDPPARKANSEPVLDPQQMQAFDQLCRLYRGSSRLALLTELSQNRGGDSCRPFAGPQSGPAFNSVFQKENFQLQLAPPPVAED.

A phosphoserine mark is found at Ser-26, Ser-32, and Ser-127. The WD repeat unit spans residues 193 to 234 (VGGQYGAISALSINNDCSRLLCGFAKGQITMWDLASGKLLRS). Residues 1257-1309 (CSICLQQYKRRQEMADEIIVFSCGHLYHSFCLQSKECTLEVEGQTRWACHKCS) form an RING-type; atypical zinc finger. The disordered stretch occupies residues 1311-1355 (SNKAGKLSENPSENKKGRITSSQVKMSPSYHQSKGDPPARKANSE). A compositionally biased stretch (polar residues) spans 1329 to 1342 (ITSSQVKMSPSYHQ). Residues 1343 to 1353 (SKGDPPARKAN) are compositionally biased toward basic and acidic residues.

It belongs to the VPS8 family. Interacts with RAB5C. Interacts with TGFBRAP1. Component of the putative class C core vacuole/endosome tethering (CORVET) complex; the core of which is composed of the class C Vps proteins VPS11, VPS16, VPS18 and VPS33A, associated with VPS8 and TGFBRAP1.

Plays a role in vesicle-mediated protein trafficking of the endocytic membrane transport pathway. Believed to act as a component of the putative CORVET endosomal tethering complexes which is proposed to be involved in the Rab5-to-Rab7 endosome conversion probably implicating MON1A/B, and via binding SNAREs and SNARE complexes to mediate tethering and docking events during SNARE-mediated membrane fusion. The CORVET complex is proposed to function as a Rab5 effector to mediate early endosome fusion probably in specific endosome subpopulations. Functions predominantly in APPL1-containing endosomes. In Mus musculus (Mouse), this protein is Vacuolar protein sorting-associated protein 8 homolog (Vps8).